The sequence spans 154 residues: Large ribosomal subunit protein uL13 (154 aa).

This sequence belongs to the universal ribosomal protein uL13 family. As to quaternary structure, part of the 50S ribosomal subunit.

This protein is one of the early assembly proteins of the 50S ribosomal subunit, although it is not seen to bind rRNA by itself. It is important during the early stages of 50S assembly. This is Large ribosomal subunit protein uL13 from Rhodopseudomonas palustris (strain BisB5).